We begin with the raw amino-acid sequence, 391 residues long: Tryptophan synthase beta chain (391 aa).

N6-(pyridoxal phosphate)lysine is present on K84.

This sequence belongs to the TrpB family. Tetramer of two alpha and two beta chains. Requires pyridoxal 5'-phosphate as cofactor.

It catalyses the reaction (1S,2R)-1-C-(indol-3-yl)glycerol 3-phosphate + L-serine = D-glyceraldehyde 3-phosphate + L-tryptophan + H2O. The protein operates within amino-acid biosynthesis; L-tryptophan biosynthesis; L-tryptophan from chorismate: step 5/5. Its function is as follows. The beta subunit is responsible for the synthesis of L-tryptophan from indole and L-serine. This chain is Tryptophan synthase beta chain, found in Thermoanaerobacter sp. (strain X514).